Reading from the N-terminus, the 251-residue chain is Triosephosphate isomerase (251 aa).

Residue 9-11 coordinates substrate; the sequence is NWK. His95 functions as the Electrophile in the catalytic mechanism. The active-site Proton acceptor is the Glu167. Substrate-binding positions include Gly173, Ser213, and 234-235; that span reads GG. Ser213 is subject to Phosphoserine.

The protein belongs to the triosephosphate isomerase family. Homodimer.

It is found in the cytoplasm. It catalyses the reaction D-glyceraldehyde 3-phosphate = dihydroxyacetone phosphate. It functions in the pathway carbohydrate biosynthesis; gluconeogenesis. The protein operates within carbohydrate degradation; glycolysis; D-glyceraldehyde 3-phosphate from glycerone phosphate: step 1/1. Its function is as follows. Involved in the gluconeogenesis. Catalyzes stereospecifically the conversion of dihydroxyacetone phosphate (DHAP) to D-glyceraldehyde-3-phosphate (G3P). The chain is Triosephosphate isomerase from Bacillus cereus (strain B4264).